The chain runs to 273 residues: DNA repair protein RecO (273 aa).

Positions 250-273 are disordered; sequence NVGQNPSGKDDLNERRDVDGTGES. The segment covering 257 to 273 has biased composition (basic and acidic residues); it reads GKDDLNERRDVDGTGES.

It belongs to the RecO family.

Functionally, involved in DNA repair and RecF pathway recombination. This Desulfitobacterium hafniense (strain Y51) protein is DNA repair protein RecO.